An 822-amino-acid chain; its full sequence is Telomere length regulation protein TEL2 homolog (822 aa).

The disordered stretch occupies residues Asn442–Pro504. Positions Val465 to Gly477 are enriched in polar residues. The segment covering Ser480–Thr489 has biased composition (acidic residues).

This sequence belongs to the TEL2 family.

Its subcellular location is the cytoplasm. The protein resides in the membrane. It localises to the nucleus. Its function is as follows. Regulator of the DNA damage response (DDR). Part of the TTT complex that is required to stabilize protein levels of the phosphatidylinositol 3-kinase-related protein kinase (PIKK) family proteins. Promotes assembly, stabilizes and maintains the activity of TORC complexes, which regulate cell growth and survival in response to nutrient and hormonal signals. May be involved in telomere length regulation. This is Telomere length regulation protein TEL2 homolog (telo2) from Danio rerio (Zebrafish).